The chain runs to 92 residues: Long neurotoxin 1 (92 aa).

Residues 1–21 form the signal peptide; the sequence is MKTLLLTLVVVTIVCLDLGYT. Disulfide bonds link C24–C42, C35–C63, C67–C79, and C80–C85.

Belongs to the three-finger toxin family. Long-chain subfamily. Type II alpha-neurotoxin sub-subfamily. As to expression, expressed by the venom gland.

It is found in the secreted. Binds with high affinity to muscular (alpha-1/CHRNA1) and neuronal (alpha-7/CHRNA7) nicotinic acetylcholine receptor (nAChR) and inhibits acetylcholine from binding to the receptor, thereby impairing neuromuscular and neuronal transmission. In Oxyuranus scutellatus scutellatus (Australian taipan), this protein is Long neurotoxin 1.